The sequence spans 390 residues: Pyruvate dehydrogenase E1 component subunit alpha, somatic form, mitochondrial (390 aa).

Residues M1–N29 constitute a mitochondrion transit peptide. K63 carries the post-translational modification N6-acetyllysine; alternate. Position 63 is an N6-succinyllysine; alternate (K63). H92, Y118, R119, A157, G165, V167, D196, G197, A198, N225, and Y227 together coordinate pyruvate. Residues Y118 and R119 each coordinate thiamine diphosphate. Thiamine diphosphate is bound by residues G165, V167, D196, G197, A198, and N225. Residue D196 coordinates Mg(2+). 2 residues coordinate Mg(2+): N225 and Y227. Residue S232 is modified to Phosphoserine; by PDK1. K244 carries the N6-acetyllysine; alternate modification. K244 carries the N6-succinyllysine; alternate modification. K277 bears the N6-succinyllysine mark. H292 serves as a coordination point for thiamine diphosphate. Phosphoserine; by PDK1, PDK2, PDK3 and PDK4 is present on S293. Phosphoserine is present on S295. S300 is subject to Phosphoserine; by PDK1, PDK2, PDK3 and PDK4. Y301 is modified (phosphotyrosine). K313 is subject to N6-acetyllysine; alternate. At K313 the chain carries N6-succinyllysine; alternate. K321 and K336 each carry N6-acetyllysine. An N6-succinyllysine modification is found at K385.

In terms of assembly, heterotetramer of two PDHA1 and two PDHB subunits. The heterotetramer interacts with DLAT, and is part of the multimeric pyruvate dehydrogenase complex that contains multiple copies of pyruvate dehydrogenase (E1), dihydrolipoamide acetyltransferase (DLAT, E2) and lipoamide dehydrogenase (DLD, E3). These subunits are bound to an inner core composed of about 48 DLAT and 12 PDHX molecules. The cofactor is thiamine diphosphate. Mg(2+) serves as cofactor. Post-translationally, phosphorylation at Ser-232, Ser-293 and Ser-300 by PDK family kinases inactivates the enzyme; for this phosphorylation at a single site is sufficient. Dephosphorylation at all three sites, i.e. at Ser-232, Ser-293 and Ser-300, is required for reactivation. In terms of processing, acetylation alters the phosphorylation pattern. Deacetylated by SIRT3. As to expression, ubiquitous.

Its subcellular location is the mitochondrion matrix. It carries out the reaction N(6)-[(R)-lipoyl]-L-lysyl-[protein] + pyruvate + H(+) = N(6)-[(R)-S(8)-acetyldihydrolipoyl]-L-lysyl-[protein] + CO2. Its activity is regulated as follows. Pyruvate dehydrogenase activity is inhibited by phosphorylation of PDHA1; it is reactivated by dephosphorylation. Functionally, the pyruvate dehydrogenase complex catalyzes the overall conversion of pyruvate to acetyl-CoA and CO(2), and thereby links the glycolytic pathway to the tricarboxylic cycle. The protein is Pyruvate dehydrogenase E1 component subunit alpha, somatic form, mitochondrial (PDHA1) of Homo sapiens (Human).